Consider the following 220-residue polypeptide: MSNQQALVIFSGGQDSTTCLIQAIQTYGRENVQAITFQYGQRHAVELERARWIAQDLGIKQTVLDLSLMRQITHNALMDDTAAIETAENGVPNTFVDGRNALFLLYAAIYAKGQGIRHIIAGVCETDFSGYPDCRDVFVKSMNVTLNLAMDYDFQIHTPLMYLTKAQTWALADEMGALDYIREQTHTCYNGIVGGGCRECPSCILRERGLAEYLESKKAV.

Residue 10–20 (FSGGQDSTTCL) participates in ATP binding. The Zn(2+) site is built by cysteine 188, cysteine 197, cysteine 200, and cysteine 203.

The protein belongs to the QueC family. It depends on Zn(2+) as a cofactor.

The catalysed reaction is 7-carboxy-7-deazaguanine + NH4(+) + ATP = 7-cyano-7-deazaguanine + ADP + phosphate + H2O + H(+). It functions in the pathway purine metabolism; 7-cyano-7-deazaguanine biosynthesis. Its function is as follows. Catalyzes the ATP-dependent conversion of 7-carboxy-7-deazaguanine (CDG) to 7-cyano-7-deazaguanine (preQ(0)). This chain is 7-cyano-7-deazaguanine synthase, found in Neisseria meningitidis serogroup C (strain 053442).